The chain runs to 633 residues: MADNQGTEEEGTGCNGWFFVEAIVERKTGDIISDDEPEDVEDSGLDMVDFIDNSVSQVEGQENPQALLHAQQLQADVEAVQQLKRKYIGSPYVSPVANSEPCVEKDLSPRLGAISLGRRSAKAKRRLFDKAQPPPNGHTDVEAAVEVNTEGTDETETDQVQTVSGETTTDSLGRQQITELIHNTNIRVALFGMFKDLYGLSFMDLARPFKSDKTVCTDWVIAAFGIYHGITDGFKTLLEPHCLYGHIQWLTCRWGMVLLLLTRFKCGKNRLTVSKCLGMLLNIPETQMLIDPPKLRTPAAALYWYRQGLSNASEIFGTPPEWLARQTVIEYSLADSQFDLSKMVQWAYDHNYIDDSIIALEYAKLADIDENAAAFLGSNCQAKYVKDCGTMCRHYIRAQKMQMTMSQWIKHRCDLVEEEGEWKEIVRFLRYQHVDFISFMIALKQFLQGIPKHNCILLYGPPDTGKSNFAMSLISFLGGVVLSYVNSSSHFWLEPLADAKIAMLDDATTQCWNYMDIYMRNALDGNPMCFDRKHRAMVQTKCPPLIVTSNINASTDDRWRYLHSRVKCFCFPNRFPFDSNGNPVYDLSNKNWKSFFKRSWSRLALNDNDNEEEENGDPSNTFRCVPGKASRPI.

The Nuclear localization signal motif lies at 84–86 (KRK). Residues serine 90, serine 94, and serine 108 each carry the phosphoserine; by host modification. The short motif at 107-116 (LSPRLGAISL) is the Nuclear export signal element. The disordered stretch occupies residues 148 to 168 (NTEGTDETETDQVQTVSGETT). Polar residues predominate over residues 158-168 (DQVQTVSGETT). The interval 169–335 (TDSLGRQQIT…QTVIEYSLAD (167 aa)) is DNA-binding region. Residues 434–584 (VDFISFMIAL…FPFDSNGNPV (151 aa)) enclose the SF3 helicase domain. ATP is bound at residue 460-467 (GPPDTGKS). Residue lysine 541 forms a Glycyl lysine isopeptide (Lys-Gly) (interchain with G-Cter in SUMO) linkage. Residues 609 to 633 (DNEEEENGDPSNTFRCVPGKASRPI) form a disordered region.

This sequence belongs to the papillomaviridae E1 protein family. Can form hexamers. Interacts with E2 protein; this interaction increases E1 DNA binding specificity. Interacts with host DNA polymerase subunit POLA2. Interacts with host single stranded DNA-binding protein RPA1. Interacts with host TOP1; this interaction stimulates the enzymatic activity of TOP1. In terms of processing, phosphorylated. Sumoylated.

It is found in the host nucleus. The catalysed reaction is Couples ATP hydrolysis with the unwinding of duplex DNA by translocating in the 3'-5' direction.. It catalyses the reaction ATP + H2O = ADP + phosphate + H(+). In terms of biological role, ATP-dependent DNA 3'-5' helicase required for initiation of viral DNA replication. It forms a complex with the viral E2 protein. The E1-E2 complex binds to the replication origin which contains binding sites for both proteins. During the initial step, a dimer of E1 interacts with a dimer of protein E2 leading to a complex that binds the viral origin of replication with high specificity. Then, a second dimer of E1 displaces the E2 dimer in an ATP-dependent manner to form the E1 tetramer. Following this, two E1 monomers are added to each half of the site, which results in the formation of two E1 trimers on the viral ori. Subsequently, two hexamers will be created. The double hexamer acts as a bi-directional helicase machinery and unwinds the viral DNA and then recruits the host DNA polymerase to start replication. The protein is Replication protein E1 of Homo sapiens (Human).